The sequence spans 351 residues: Molybdenum import ATP-binding protein ModC (351 aa).

The region spanning methionine 1–serine 229 is the ABC transporter domain. Glycine 31–threonine 38 is a binding site for ATP. Residues glutamine 289–methionine 351 form the Mop domain.

The protein belongs to the ABC transporter superfamily. Molybdate importer (TC 3.A.1.8) family. The complex is composed of two ATP-binding proteins (ModC), two transmembrane proteins (ModB) and a solute-binding protein (ModA).

Its subcellular location is the cell inner membrane. It carries out the reaction molybdate(out) + ATP + H2O = molybdate(in) + ADP + phosphate + H(+). Its function is as follows. Part of the ABC transporter complex ModABC involved in molybdenum import. Responsible for energy coupling to the transport system. In Haemophilus influenzae (strain ATCC 51907 / DSM 11121 / KW20 / Rd), this protein is Molybdenum import ATP-binding protein ModC.